A 498-amino-acid polypeptide reads, in one-letter code: ATP synthase subunit beta, chloroplastic (498 aa).

172–179 (GGAGVGKT) is an ATP binding site.

The protein belongs to the ATPase alpha/beta chains family. As to quaternary structure, F-type ATPases have 2 components, CF(1) - the catalytic core - and CF(0) - the membrane proton channel. CF(1) has five subunits: alpha(3), beta(3), gamma(1), delta(1), epsilon(1). CF(0) has four main subunits: a(1), b(1), b'(1) and c(9-12).

The protein resides in the plastid. It localises to the chloroplast thylakoid membrane. It carries out the reaction ATP + H2O + 4 H(+)(in) = ADP + phosphate + 5 H(+)(out). In terms of biological role, produces ATP from ADP in the presence of a proton gradient across the membrane. The catalytic sites are hosted primarily by the beta subunits. The polypeptide is ATP synthase subunit beta, chloroplastic (Lactuca sativa (Garden lettuce)).